Here is a 112-residue protein sequence, read N- to C-terminus: UPF0342 protein SPH_1504 (112 aa).

The protein belongs to the UPF0342 family.

The polypeptide is UPF0342 protein SPH_1504 (Streptococcus pneumoniae (strain Hungary19A-6)).